We begin with the raw amino-acid sequence, 321 residues long: Cytochrome c biogenesis protein CcsA (321 aa).

Helical transmembrane passes span 17–37 (IVSI…IVGL), 44–64 (GMIS…IYSG), 71–91 (LYES…IPYF), 98–118 (LSLV…SGLL), 143–163 (MVLS…LLVI), 225–245 (VISL…VWAN), 258–275 (ETWA…LHTR), and 286–306 (AIVA…VNLL).

The protein belongs to the CcmF/CycK/Ccl1/NrfE/CcsA family. In terms of assembly, may interact with Ccs1.

The protein resides in the plastid. Its subcellular location is the chloroplast thylakoid membrane. In terms of biological role, required during biogenesis of c-type cytochromes (cytochrome c6 and cytochrome f) at the step of heme attachment. This Buxus microphylla (Littleleaf boxwood) protein is Cytochrome c biogenesis protein CcsA.